A 637-amino-acid polypeptide reads, in one-letter code: Early transcription factor 70 kDa subunit (637 aa).

Belongs to the helicase family. VETF subfamily. As to quaternary structure, heterodimer of a 70 kDa and a 82 kDa subunit. Part of the early transcription complex composed of ETF, RAP94/OPG109, and the DNA-directed RNA polymerase. Apparently non-glycosylated.

Its subcellular location is the virion. Its function is as follows. Acts with RNA polymerase to initiate transcription from early gene promoters. Is recruited by the RPO-associated protein of 94 kDa RAP94/OPG109 to form the early transcription complex, which also contains the core RNA polymerase. ETF heterodimer binds to early gene promoters. In Monkeypox virus, this protein is Early transcription factor 70 kDa subunit (OPG118).